The sequence spans 181 residues: Glucose-1-phosphate adenylyltransferase large subunit 2 (181 aa).

The protein belongs to the bacterial/plant glucose-1-phosphate adenylyltransferase family. Heterotetramer. Leaves.

It localises to the plastid. The protein localises to the chloroplast. The protein resides in the amyloplast. It catalyses the reaction alpha-D-glucose 1-phosphate + ATP + H(+) = ADP-alpha-D-glucose + diphosphate. Its pathway is glycan biosynthesis; starch biosynthesis. Its activity is regulated as follows. Highly active without 3'phosphoglycerate, and is only slightly affected by the activator 3'phosphoglycerate and inhibitor orthophosphate. Its function is as follows. This protein plays a role in synthesis of starch. It catalyzes the synthesis of the activated glycosyl donor, ADP-glucose from Glc-1-P and ATP. This is Glucose-1-phosphate adenylyltransferase large subunit 2 from Hordeum vulgare (Barley).